A 703-amino-acid polypeptide reads, in one-letter code: MTHIPKRTLVTTALPYANGPVHLGHLAGVYLPADIYVRYKRLCGHDVIHIGGSDEHGVPITITADKEGISPQEVVDRYHTMNAEAFAKCGISFDYYGRTSGPVHHQTAREFFLEIEKKGIFVKKTEKQFFDPKAGRFLSDRYITGTCPVCKTPGANGDQCEQCGTHLSPTELIDPKSKLSDATPELRETLHWYFPLGRYQKQLEAFVERHTGDWRSNVVNYSRTWLNQGLADRAITRDLAWGISLPLDSEEAKGKVLYVWFDAVLGYISFTKEWAEKQGDAELWRRYWQDPETRIINFIGKDNVVFHTLMFPAILMAWNEGRSEGRYELADNVPASEFMNFEGRKFSKSRNYAVYLGEFLERFPADTLRYSIAMNYPENKDTDFSWSDFQNRTNGELADTLGNFIKRSIDFTNSRFGGQVPADIDLEAWDSLGIDWLASFGKLEAAYDGFHFREATAQTMEIARFANRFLTESEPWKVIKVDPEAAGRTMAVSLNLCHTLALLFWPIVPETANRIWKMLGFEGTIDELVEPGNPVWRQALEPGLKKGHKLLGSSEILFSKIEDKDIEPEMKKIEALLAEAEQREAAKQPVPMTFKPEITFDDFQKIDLRVAKVVACEPVKKANKLLKLQLQVGSEQRQVLSGIAQYFTPEQMVGKNVVLVANLADRTMRGELSQGMILTVEGADGRLFLLEPQGEGINGNSVS.

The 'HIGH' region motif lies at 15–25 (PYANGPVHLGH). Positions 147, 150, 160, and 163 each coordinate Zn(2+). The short motif at 345–349 (KFSKS) is the 'KMSKS' region element. Lys348 is a binding site for ATP. Residues 602-703 (DFQKIDLRVA…GEGINGNSVS (102 aa)) form the tRNA-binding domain.

Belongs to the class-I aminoacyl-tRNA synthetase family. MetG type 1 subfamily. As to quaternary structure, homodimer. Zn(2+) serves as cofactor.

It is found in the cytoplasm. It carries out the reaction tRNA(Met) + L-methionine + ATP = L-methionyl-tRNA(Met) + AMP + diphosphate. In terms of biological role, is required not only for elongation of protein synthesis but also for the initiation of all mRNA translation through initiator tRNA(fMet) aminoacylation. This is Methionine--tRNA ligase from Chlorobaculum tepidum (strain ATCC 49652 / DSM 12025 / NBRC 103806 / TLS) (Chlorobium tepidum).